Reading from the N-terminus, the 343-residue chain is Methionine import ATP-binding protein MetN (343 aa).

Residues 2–241 form the ABC transporter domain; sequence IKLSNITKVF…PKTPLAQKFI (240 aa). Residue 40 to 46 participates in ATP binding; that stretch reads SGAGKST. A C2 domain region spans residues 265–343; that stretch reads CVPMLRLEFT…HVKVEVLGYV (79 aa). L-methionine contacts are provided by residues 278-283 and 295-296; these read VDAPLL and NI.

This sequence belongs to the ABC transporter superfamily. Methionine importer (TC 3.A.1.24) family. The complex is composed of two ATP-binding proteins (MetN), two transmembrane proteins (MetI) and a solute-binding protein (MetQ).

The protein localises to the cell inner membrane. It carries out the reaction L-methionine(out) + ATP + H2O = L-methionine(in) + ADP + phosphate + H(+). It catalyses the reaction D-methionine(out) + ATP + H2O = D-methionine(in) + ADP + phosphate + H(+). Its activity is regulated as follows. ATPase activity is inhibited by intracellular L-methionine. Binding of methionine to the dimerized C-terminal regulatory domain stabilizes an inward-facing, ATPase-inactive conformation of the transporter, and as a consequence, the rate of ATP hydrolysis decreases. ADP is a competitive inhibitor. In terms of biological role, part of the ABC transporter complex MetNIQ involved in methionine import. Responsible for energy coupling to the transport system. It has also been shown to be involved in formyl-L-methionine transport. In Escherichia coli (strain K12), this protein is Methionine import ATP-binding protein MetN.